Consider the following 240-residue polypeptide: Probable phosphatase Athe_0620 (240 aa).

Positions 8, 10, 16, 41, 74, 102, 132, 192, and 194 each coordinate Zn(2+).

The protein belongs to the PHP family. The cofactor is Zn(2+).

The sequence is that of Probable phosphatase Athe_0620 from Caldicellulosiruptor bescii (strain ATCC BAA-1888 / DSM 6725 / KCTC 15123 / Z-1320) (Anaerocellum thermophilum).